Reading from the N-terminus, the 202-residue chain is UPF0301 protein ML0028 (202 aa).

This sequence belongs to the UPF0301 (AlgH) family.

The chain is UPF0301 protein ML0028 from Mycobacterium leprae (strain TN).